A 1167-amino-acid polypeptide reads, in one-letter code: C5a peptidase (1167 aa).

A signal peptide spans 1–31 (MRKKQKLPFDKLAIALMSTSILLNAQSDIKA). A compositionally biased stretch (polar residues) spans 34-52 (VTEDTPVTEQAVETPQPTA). Residues 34 to 73 (VTEDTPVTEQAVETPQPTAVSEEVPSSKETKTPQTPDDAE) are disordered. A Peptidase S8 domain is found at 99 to 581 (KATIRDLNDP…AGAVDAKKAS (483 aa)). Residues D130, H193, and S512 each act as charge relay system in the active site. The tract at residues 1029–1133 (EGHSNKPEQD…RDQLPTTNDK (105 aa)) is disordered. A run of 4 repeats spans residues 1034–1050 (KPEQDGSGQTPDKKPEA), 1051–1067 (KPEQDGSDQAPDKKPEA), 1068–1084 (KPEQDGSGQTPDKKPET), and 1085–1101 (KPEKDSSGQTPGKTPQK). A 4 X 17 AA tandem repeats region spans residues 1034–1101 (KPEQDGSGQT…GQTPGKTPQK (68 aa)). Basic and acidic residues-rich tracts occupy residues 1044 to 1071 (PDKKPEAKPEQDGSDQAPDKKPEAKPEQ) and 1078 to 1090 (PDKKPETKPEKDS). Polar residues-rich tracts occupy residues 1092-1106 (GQTPGKTPQKGQPSR) and 1120-1130 (KASTRDQLPTT). The LPXTG sorting signal signature appears at 1127–1131 (LPTTN). Pentaglycyl murein peptidoglycan amidated threonine is present on T1130. The propeptide at 1131–1167 (NDKDTNRLHLLKLVMTTFFFGLVAHIFKTKRQKETKK) is removed by sortase.

This sequence belongs to the peptidase S8 family. Cleaved by SpeB protease; leading to its degradation. Degradation by SpeB is probably strictly regulated to preserve integrity of C5a peptidase.

Its subcellular location is the secreted. The protein resides in the cell wall. The catalysed reaction is The primary cleavage site is at 67-His-|-Lys-68 in human C5a with a minor secondary cleavage site at 58-Ala-|-Ser-59.. In terms of biological role, this virulence factor of S.pyogenes specifically cleaves the human serum chemotaxin C5a at '68-Lys-|-Asp-69' bond near its C-terminus, destroying its ability to serve as a chemoattractant. This chain is C5a peptidase (scpA), found in Streptococcus pyogenes.